We begin with the raw amino-acid sequence, 241 residues long: NAD-dependent protein deacylase (241 aa).

In terms of domain architecture, Deacetylase sirtuin-type spans 1–237 (MNFPYRNIVV…PKLVDEILAL (237 aa)). 13–32 (GAGISAESGIQTFRAQDGLW) is an NAD(+) binding site. Residues tyrosine 57 and arginine 60 each coordinate substrate. NAD(+) is bound at residue 94 to 97 (QNID). The Proton acceptor role is filled by histidine 112. Zn(2+) is bound by residues cysteine 120 and cysteine 139. Residues 179–181 (GTS), 205–207 (NLE), and alanine 223 each bind NAD(+).

Belongs to the sirtuin family. Class III subfamily. As to quaternary structure, monomer. The cofactor is Zn(2+).

The protein localises to the cytoplasm. Its subcellular location is the host cytoplasm. It localises to the host cytosol. The protein resides in the host nucleus. The catalysed reaction is N(6)-acetyl-L-lysyl-[protein] + NAD(+) + H2O = 2''-O-acetyl-ADP-D-ribose + nicotinamide + L-lysyl-[protein]. It catalyses the reaction N(6)-succinyl-L-lysyl-[protein] + NAD(+) + H2O = 2''-O-succinyl-ADP-D-ribose + nicotinamide + L-lysyl-[protein]. Functionally, NAD-dependent lysine deacetylase and desuccinylase that specifically removes acetyl and succinyl groups on target proteins. Modulates the activities of several proteins which are inactive in their acylated form. In the intracellular pathogen V.parahaemolyticus, this enzyme regulates host response during infection by induction of host histone deacetylation; it specifically causes deacetylation of histone lysine residues H3K56, H3K9, H3K18 and H4K16 which results in transcriptional repression of several host genes involved in epigenetic regulation, immune response, and autophagy. In Vibrio parahaemolyticus serotype O3:K6 (strain RIMD 2210633), this protein is NAD-dependent protein deacylase.